The primary structure comprises 231 residues: Female protein (231 aa).

Residues 1–19 form the signal peptide; it reads MDKMLLLLGVSILLSEVFA. The region spanning 24-223 is the Pentraxin (PTX) domain; that stretch reads TGKVFVFPRE…YAVIRPRCVA (200 aa). N51 is a glycosylation site (N-linked (GlcNAc...) asparagine). Residues C55 and C114 are joined by a disulfide bond. The Ca(2+) site is built by D77, N78, E155, Q156, D157, and Q167.

Belongs to the pentraxin family. In terms of assembly, homopentamer. Pentraxin (or pentaxin) have a discoid arrangement of 5 non-covalently bound subunits. Ca(2+) is required as a cofactor.

It localises to the secreted. This chain is Female protein, found in Nothocricetulus migratorius (Gray dwarf hamster).